Here is a 216-residue protein sequence, read N- to C-terminus: Histone doublet H4-H3 (216 aa).

The segment covering 1-12 has biased composition (basic residues); that stretch reads MSKAGKKVKAQQ. Residues 1–23 form a disordered region; sequence MSKAGKKVKAQQHGHLADHVSVG.

The protein localises to the host nucleus. Its subcellular location is the host cytoplasm. It localises to the virion. In terms of biological role, histone-like protein that is recruited to viral factories during viral replication and participates in viral DNA packaging and virion production probably by forming unstable nucleosome-like particles. May compact the viral DNA. This Melbournevirus (MelV) protein is Histone doublet H4-H3.